The sequence spans 958 residues: Structure-specific endonuclease subunit SLX4 (958 aa).

Disordered stretches follow at residues Ala89–Thr123, Gln183–Asp209, Leu326–Thr400, Asp531–Gln589, Gln594–Leu613, and Ser655–Ala849. A compositionally biased stretch (basic residues) spans Lys109–Gly121. Basic and acidic residues predominate over residues Arg332 to Thr341. Polar residues predominate over residues Leu342–Pro351. Low complexity predominate over residues Ala364–Pro373. Positions Lys374–Gln389 are enriched in basic residues. Residues Gln600–Ser610 show a composition bias toward pro residues. 3 stretches are compositionally biased toward low complexity: residues Ser655–Ala666, Thr775–Ala787, and Pro821–Asp838.

This sequence belongs to the SLX4 family. Forms a heterodimer with SLX1. In terms of processing, phosphorylated in response to DNA damage.

Its subcellular location is the nucleus. Its function is as follows. Regulatory subunit of the SLX1-SLX4 structure-specific endonuclease that resolves DNA secondary structures generated during DNA repair and recombination. Has endonuclease activity towards branched DNA substrates, introducing single-strand cuts in duplex DNA close to junctions with ss-DNA. The polypeptide is Structure-specific endonuclease subunit SLX4 (Chaetomium globosum (strain ATCC 6205 / CBS 148.51 / DSM 1962 / NBRC 6347 / NRRL 1970) (Soil fungus)).